The sequence spans 243 residues: Ubiquinone/menaquinone biosynthesis C-methyltransferase UbiE (243 aa).

Residues Thr-69, Asp-90, and 116–117 (DA) each bind S-adenosyl-L-methionine.

Belongs to the class I-like SAM-binding methyltransferase superfamily. MenG/UbiE family.

The catalysed reaction is a 2-demethylmenaquinol + S-adenosyl-L-methionine = a menaquinol + S-adenosyl-L-homocysteine + H(+). It catalyses the reaction a 2-methoxy-6-(all-trans-polyprenyl)benzene-1,4-diol + S-adenosyl-L-methionine = a 5-methoxy-2-methyl-3-(all-trans-polyprenyl)benzene-1,4-diol + S-adenosyl-L-homocysteine + H(+). The protein operates within quinol/quinone metabolism; menaquinone biosynthesis; menaquinol from 1,4-dihydroxy-2-naphthoate: step 2/2. It functions in the pathway cofactor biosynthesis; ubiquinone biosynthesis. In terms of biological role, methyltransferase required for the conversion of demethylmenaquinol (DMKH2) to menaquinol (MKH2) and the conversion of 2-polyprenyl-6-methoxy-1,4-benzoquinol (DDMQH2) to 2-polyprenyl-3-methyl-6-methoxy-1,4-benzoquinol (DMQH2). The protein is Ubiquinone/menaquinone biosynthesis C-methyltransferase UbiE of Paraburkholderia xenovorans (strain LB400).